Here is a 317-residue protein sequence, read N- to C-terminus: Transaldolase (317 aa).

The active-site Schiff-base intermediate with substrate is K132.

It belongs to the transaldolase family. Type 1 subfamily. Homodimer.

Its subcellular location is the cytoplasm. The catalysed reaction is D-sedoheptulose 7-phosphate + D-glyceraldehyde 3-phosphate = D-erythrose 4-phosphate + beta-D-fructose 6-phosphate. It functions in the pathway carbohydrate degradation; pentose phosphate pathway; D-glyceraldehyde 3-phosphate and beta-D-fructose 6-phosphate from D-ribose 5-phosphate and D-xylulose 5-phosphate (non-oxidative stage): step 2/3. Functionally, transaldolase is important for the balance of metabolites in the pentose-phosphate pathway. The polypeptide is Transaldolase (Haemophilus influenzae (strain 86-028NP)).